Consider the following 319-residue polypeptide: Cobalamin biosynthesis protein CbiB (319 aa).

A run of 5 helical transmembrane segments spans residues 56-76, 82-102, 153-173, 204-224, and 296-316; these read VMWV…LALA, WFGW…RSLA, VDGI…LAMA, VANY…AGLC, and LMWV…CGLS.

Belongs to the CobD/CbiB family.

It is found in the cell membrane. It functions in the pathway cofactor biosynthesis; adenosylcobalamin biosynthesis. Functionally, converts cobyric acid to cobinamide by the addition of aminopropanol on the F carboxylic group. However, the true cosubstrate could be (R)-1-amino-2-propanol O-2-phosphate, leading to cobinamide phosphate. This is Cobalamin biosynthesis protein CbiB from Salmonella choleraesuis (strain SC-B67).